Consider the following 176-residue polypeptide: MPAGLICIARIGAPHGVRGAMRLWSFTAEPLAVMDYGPLATKDGARSFEIATARPAKDHLVVTLKGVATREEAERLNGLELYVPRDRLPPTEDGEYYHADLIGLPAITPAGEPLGRVLAIHNFGAGDIIEIAPPQGATLLLPFTNAVVPTVDLTAGHVVIELPTEIEGDTPNHPEA.

Residues 93–170 enclose the PRC barrel domain; it reads DGEYYHADLI…ELPTEIEGDT (78 aa).

This sequence belongs to the RimM family. As to quaternary structure, binds ribosomal protein uS19.

The protein localises to the cytoplasm. Its function is as follows. An accessory protein needed during the final step in the assembly of 30S ribosomal subunit, possibly for assembly of the head region. Essential for efficient processing of 16S rRNA. May be needed both before and after RbfA during the maturation of 16S rRNA. It has affinity for free ribosomal 30S subunits but not for 70S ribosomes. The polypeptide is Ribosome maturation factor RimM (Rhodopseudomonas palustris (strain BisB5)).